The following is a 174-amino-acid chain: Superoxide dismutase [Cu-Zn] (174 aa).

Residues 1 to 23 form the signal peptide; it reads MIRLSAAAALGLAAALAASPALA. The Cu cation site is built by H68, H70, and H86. C75 and C170 are joined by a disulfide. Zn(2+) contacts are provided by H86, H95, D104, and D107. H150 is a Cu cation binding site.

This sequence belongs to the Cu-Zn superoxide dismutase family. As to quaternary structure, homodimer. The cofactor is Cu cation. It depends on Zn(2+) as a cofactor.

Its subcellular location is the periplasm. It carries out the reaction 2 superoxide + 2 H(+) = H2O2 + O2. Its function is as follows. Destroys radicals which are normally produced within the cells and which are toxic to biological systems. May function against extracytoplasmic toxic oxygen species. This Caulobacter vibrioides (strain ATCC 19089 / CIP 103742 / CB 15) (Caulobacter crescentus) protein is Superoxide dismutase [Cu-Zn] (sodC).